The chain runs to 769 residues: MRQTISTMAASSKTNMMQIMRGCICYTTVYRIWTNKNRTEGLTALCYLLFRNTCGQYSAQYSTVNLSGKSMAKLWGLNPDMITDTMLAGMTNSASVTGLWPSCPSDQHMLWKALLTTTLAKLRHRLGYHAYYTPVTIYIDSQTGLVTACEPVSGERSIPRPGLLKTDGMISVEESCLISTAMKHAEGAPLAHIKLSALKRTRQIPEFDMRIEIQTKEERFLREYKKVNSPYKKFKCDNNSNTIFKVVDNTLVLDHLQPPVRALSLVPTSFDCLVTTPAEFSLVALLATYAKWHEKLYSCDNESTNILVPILMYIGPETNPRGEDVDYSCIIGFPGWPIVKSSTANQTAIKDAIDAYVDTDGLWPLAGPRTFHLLAPWSPENHPFPMIDTSHILSVHSTDIRHKAADEWTTGRITCILRDPTLIENAAIAKFDFSAFFATLYLGLFPTHSRLHDVVKARLKREKPWLKRPILEFGGLLKKLNEDVYQSIISIGNHISIEVEATASSLMFAPCTYIKDGMWGTFMDKSKNVPRPPMDDERDFNILRNACAESANNFAATIGLQFPDEILLDLRLEGIYTHAMSWNANCYWLWNKSNHHKDFVGFPNQPRFASYAKHGLSTLLEKICISNDTDESLQTVREKTHEVFEELLSIAFDHRSDVSFWSCPTELYDDTQYIAALGMKAAARFDTSGFNRETVQTVTADGKIVSVTCSLFEGEIILPAIDCIDYMKPILAAFSRLLINVLSSKWDNVNRDDFTFDIESYRFMFINNK.

Belongs to the herpesviridae HEPA family. Associates with the primase and the helicase to form the helicase-primase complex. Interacts with the origin-binding protein. Interacts with the polymerase catalytic subunit.

Its subcellular location is the host nucleus. Its function is as follows. Component of the helicase/primase complex. Unwinds the DNA at the replication forks and generates single-stranded DNA for both leading and lagging strand synthesis. The primase synthesizes short RNA primers on the lagging strand that the polymerase presumably elongates using dNTPs. The primase-associated factor has no known catalytic activity in the complex and may serve to facilitate the formation of the replisome by directly interacting with the origin-binding protein and the polymerase. This Gallus gallus (Chicken) protein is DNA helicase/primase complex-associated protein (MDV020).